We begin with the raw amino-acid sequence, 401 residues long: uncharacterized protein (401 aa).

This is an uncharacterized protein from Acanthamoeba polyphaga mimivirus (APMV).